The chain runs to 122 residues: Neuropeptide B (122 aa).

Positions 1-24 (MAGPAMLVAAALALCLLLASPGLA) are cleaved as a signal peptide. Trp-25 carries the post-translational modification 6'-bromotryptophan. The propeptide occupies 56 to 122 (SEPRGGTRSL…LSLSASDCRK (67 aa)).

The protein belongs to the neuropeptide B/W family.

It is found in the secreted. Its function is as follows. May be involved in the regulation of feeding, neuroendocrine system, memory, learning and in the afferent pain pathway. The polypeptide is Neuropeptide B (NPB) (Bos taurus (Bovine)).